A 90-amino-acid polypeptide reads, in one-letter code: Small ribosomal subunit protein uS15c (90 aa).

It belongs to the universal ribosomal protein uS15 family. In terms of assembly, part of the 30S ribosomal subunit.

It is found in the plastid. Its subcellular location is the chloroplast. This chain is Small ribosomal subunit protein uS15c (rps15), found in Manihot esculenta (Cassava).